We begin with the raw amino-acid sequence, 445 residues long: O-fucosyltransferase 23 (445 aa).

Residues 12 to 34 (IFSKSVACKCLVLVGIALFYRAL) form a helical; Signal-anchor for type II membrane protein membrane-spanning segment. N-linked (GlcNAc...) asparagine glycans are attached at residues asparagine 97 and asparagine 179. Residue 258-260 (HMR) participates in substrate binding. A glycan (N-linked (GlcNAc...) asparagine) is linked at asparagine 294. Residue 374–375 (TF) coordinates substrate. An N-linked (GlcNAc...) asparagine glycan is attached at asparagine 424.

It belongs to the glycosyltransferase GT106 family. As to expression, expressed in dry pollen grains and germinating pollen grains.

It localises to the golgi apparatus membrane. Its pathway is glycan metabolism. Functionally, probable protein O-fucosyltransferase required for correct pollen tube penetration through the stigma-style interface. May be involved in protein O-glycosylation events during pollen-pistil interactions. The sequence is that of O-fucosyltransferase 23 from Arabidopsis thaliana (Mouse-ear cress).